A 540-amino-acid polypeptide reads, in one-letter code: Glucose-6-phosphate isomerase (540 aa).

The active-site Proton donor is the Glu-346. Active-site residues include His-377 and Lys-505.

The protein belongs to the GPI family.

Its subcellular location is the cytoplasm. The enzyme catalyses alpha-D-glucose 6-phosphate = beta-D-fructose 6-phosphate. It participates in carbohydrate biosynthesis; gluconeogenesis. The protein operates within carbohydrate degradation; glycolysis; D-glyceraldehyde 3-phosphate and glycerone phosphate from D-glucose: step 2/4. Its function is as follows. Catalyzes the reversible isomerization of glucose-6-phosphate to fructose-6-phosphate. The polypeptide is Glucose-6-phosphate isomerase (Francisella tularensis subsp. tularensis (strain WY96-3418)).